The following is a 194-amino-acid chain: RNA polymerase II subunit A C-terminal domain phosphatase SSU72 like protein 4 (194 aa).

The protein belongs to the SSU72 phosphatase family.

It localises to the nucleus. It carries out the reaction O-phospho-L-seryl-[protein] + H2O = L-seryl-[protein] + phosphate. The catalysed reaction is O-phospho-L-threonyl-[protein] + H2O = L-threonyl-[protein] + phosphate. Functionally, protein phosphatase that catalyzes the dephosphorylation of the C-terminal domain of RNA polymerase II. Plays a role in RNA processing and termination. The polypeptide is RNA polymerase II subunit A C-terminal domain phosphatase SSU72 like protein 4 (Homo sapiens (Human)).